The sequence spans 350 residues: UPF0284 protein MJ1598 (350 aa).

The protein belongs to the UPF0284 family.

In Methanocaldococcus jannaschii (strain ATCC 43067 / DSM 2661 / JAL-1 / JCM 10045 / NBRC 100440) (Methanococcus jannaschii), this protein is UPF0284 protein MJ1598.